A 158-amino-acid polypeptide reads, in one-letter code: Ribosomal RNA large subunit methyltransferase H (158 aa).

Residues leucine 74, glycine 105, and 124 to 129 (LGPLTL) each bind S-adenosyl-L-methionine.

Belongs to the RNA methyltransferase RlmH family. Homodimer.

Its subcellular location is the cytoplasm. The catalysed reaction is pseudouridine(1915) in 23S rRNA + S-adenosyl-L-methionine = N(3)-methylpseudouridine(1915) in 23S rRNA + S-adenosyl-L-homocysteine + H(+). In terms of biological role, specifically methylates the pseudouridine at position 1915 (m3Psi1915) in 23S rRNA. This Xylella fastidiosa (strain 9a5c) protein is Ribosomal RNA large subunit methyltransferase H.